Reading from the N-terminus, the 550-residue chain is Glucose-6-phosphate isomerase 2 (550 aa).

The Proton donor role is filled by glutamate 359. Active-site residues include histidine 390 and lysine 514.

This sequence belongs to the GPI family.

It is found in the cytoplasm. The enzyme catalyses alpha-D-glucose 6-phosphate = beta-D-fructose 6-phosphate. Its pathway is carbohydrate biosynthesis; gluconeogenesis. It participates in carbohydrate degradation; glycolysis; D-glyceraldehyde 3-phosphate and glycerone phosphate from D-glucose: step 2/4. Catalyzes the reversible isomerization of glucose-6-phosphate to fructose-6-phosphate. This is Glucose-6-phosphate isomerase 2 from Streptomyces avermitilis (strain ATCC 31267 / DSM 46492 / JCM 5070 / NBRC 14893 / NCIMB 12804 / NRRL 8165 / MA-4680).